Here is a 151-residue protein sequence, read N- to C-terminus: Cathelicidin-3 (151 aa).

Residues 1–17 (MLSCWVLLLALLGGACA) form the signal peptide. Residues 18 to 122 (LPAPLGYSQA…TCVDSMADPV (105 aa)) constitute a propeptide that is removed on maturation. 2 disulfide bridges follow: cysteine 75/cysteine 86 and cysteine 97/cysteine 114. A helical transmembrane segment spans residues 128 to 148 (WPLVPVAINTVAAGINLYKAI).

This sequence belongs to the cathelicidin family. As to expression, detected in bone marrow, liver and lung.

Its subcellular location is the secreted. The protein localises to the membrane. May bind bacterial lipopolysaccharide (LPS). May have antimicrobial activity and play a role in the innate immune response. In Gallus gallus (Chicken), this protein is Cathelicidin-3 (CATHL3).